A 49-amino-acid chain; its full sequence is Large ribosomal subunit protein eL40 (49 aa).

Belongs to the eukaryotic ribosomal protein eL40 family.

This is Large ribosomal subunit protein eL40 from Archaeoglobus fulgidus (strain ATCC 49558 / DSM 4304 / JCM 9628 / NBRC 100126 / VC-16).